A 358-amino-acid chain; its full sequence is Chorismate synthase (358 aa).

An NADP(+)-binding site is contributed by Arg47. FMN contacts are provided by residues 124–126, 240–241, Gly284, 299–303, and Arg325; these read RSS, NA, and KPVAT.

It belongs to the chorismate synthase family. Homotetramer. The cofactor is FMNH2.

The enzyme catalyses 5-O-(1-carboxyvinyl)-3-phosphoshikimate = chorismate + phosphate. It functions in the pathway metabolic intermediate biosynthesis; chorismate biosynthesis; chorismate from D-erythrose 4-phosphate and phosphoenolpyruvate: step 7/7. Functionally, catalyzes the anti-1,4-elimination of the C-3 phosphate and the C-6 proR hydrogen from 5-enolpyruvylshikimate-3-phosphate (EPSP) to yield chorismate, which is the branch point compound that serves as the starting substrate for the three terminal pathways of aromatic amino acid biosynthesis. This reaction introduces a second double bond into the aromatic ring system. This is Chorismate synthase from Phocaeicola vulgatus (strain ATCC 8482 / DSM 1447 / JCM 5826 / CCUG 4940 / NBRC 14291 / NCTC 11154) (Bacteroides vulgatus).